Here is a 369-residue protein sequence, read N- to C-terminus: Aspartate beta-hydroxylase domain-containing protein 2 (369 aa).

Over 1–58 the chain is Cytoplasmic; sequence MVWAPLGPPRTDCLTLLHTPSKDSPKMSLEWLVAWSWSLDGLRDCIATGIQSVRDCDT. Residues 59–79 form a helical membrane-spanning segment; sequence TAVITVACLLVLFVWYCYHVG. Residues 80–369 lie on the Lumenal side of the membrane; the sequence is REQPRPYVSV…ALDFIFAPGR (290 aa). Residue N211 is glycosylated (N-linked (GlcNAc...) asparagine). Positions 228 and 272 each coordinate 2-oxoglutarate. Residue H283 participates in Fe cation binding. Position 292–294 (292–294) interacts with 2-oxoglutarate; it reads RCH. Residue H328 coordinates Fe cation. R341 is a 2-oxoglutarate binding site.

This sequence belongs to the aspartyl/asparaginyl beta-hydroxylase family. Requires Fe cation as cofactor.

Its subcellular location is the membrane. Functionally, may function as 2-oxoglutarate-dependent dioxygenase. The sequence is that of Aspartate beta-hydroxylase domain-containing protein 2 (ASPHD2) from Homo sapiens (Human).